Consider the following 492-residue polypeptide: Aspartate aminotransferase (492 aa).

A chloroplast-targeting transit peptide spans 1–66; that stretch reads MMSASFKCPV…KGSCCLFNIR (66 aa). L-aspartate is bound by residues G119, W206, and N256. K319 carries the N6-(pyridoxal phosphate)lysine modification. R458 is an L-aspartate binding site.

The protein belongs to the class-I pyridoxal-phosphate-dependent aminotransferase family. As to quaternary structure, homodimer. It depends on pyridoxal 5'-phosphate as a cofactor.

It is found in the plastid. The protein resides in the chloroplast. The catalysed reaction is L-aspartate + 2-oxoglutarate = oxaloacetate + L-glutamate. Prokaryotic-type aspartate aminotransferase. Specific for aspartate and no activity with glutamine, asparagine, alanine, histidine, leucine, methionine, lysine, arginine, tryptophan, tyrosine, phenylalanine or kynurenine. The polypeptide is Aspartate aminotransferase (AAT) (Pinus pinaster (Maritime pine)).